Consider the following 185-residue polypeptide: ATP-dependent protease subunit HslV (185 aa).

Thr-12 is a catalytic residue. Na(+) contacts are provided by Ala-168, Cys-171, and Thr-174.

It belongs to the peptidase T1B family. HslV subfamily. In terms of assembly, a double ring-shaped homohexamer of HslV is capped on each side by a ring-shaped HslU homohexamer. The assembly of the HslU/HslV complex is dependent on binding of ATP.

It is found in the cytoplasm. The catalysed reaction is ATP-dependent cleavage of peptide bonds with broad specificity.. Allosterically activated by HslU binding. Its function is as follows. Protease subunit of a proteasome-like degradation complex believed to be a general protein degrading machinery. This chain is ATP-dependent protease subunit HslV, found in Roseobacter denitrificans (strain ATCC 33942 / OCh 114) (Erythrobacter sp. (strain OCh 114)).